We begin with the raw amino-acid sequence, 225 residues long: UPF0758 protein NMCC_1157 (225 aa).

Positions 102–224 (VLSDPDTVAD…VRSFRQLGLM (123 aa)) constitute an MPN domain. His173, His175, and Asp186 together coordinate Zn(2+). Residues 173 to 186 (HNHPGGSPEPSQED) carry the JAMM motif motif.

It belongs to the UPF0758 family.

The protein is UPF0758 protein NMCC_1157 of Neisseria meningitidis serogroup C (strain 053442).